A 192-amino-acid chain; its full sequence is Immunity protein YqcF (192 aa).

As to quaternary structure, probably interacts with cognate toxin YqcG but not with other non-cognate toxins. The interaction inhibits the toxic activity of YqcG.

Its subcellular location is the cytoplasm. Functionally, immunity component of one of 6 LXG toxin-immunity modules in this strain. They promote kin selection, mediate competition in biofilms, and drive spatial segregation of different strains, indicating that LXG toxins may help avoid warfare between strains in biofilms. Mediates intercellular competition during biofilm formation; disruption of the operon disadvantages the bacteria, but overexpression of the cognate immunity protein restores growth in competition with wild-type. In situ neutralizes the toxic effect of cognate toxin YqcG. Neutralizes the toxic activity of cognate toxin YqcG upon expression in E.coli. Does not have immunity protein activity on other LXG toxins. The protein is Immunity protein YqcF (yqcF) of Bacillus subtilis (strain 168).